The sequence spans 104 residues: uncharacterized protein (104 aa).

The next 2 helical transmembrane spans lie at 16–36 (LAFFYIIDGAIIALMLVLASY) and 44–64 (GGFGRIMFYVLFGTFGLFLCI).

Its subcellular location is the cell membrane. This is an uncharacterized protein from Bacillus anthracis.